The primary structure comprises 62 residues: DNA-directed RNA polymerase subunit Rpo10 (62 aa).

The Zn(2+) site is built by Cys-6, Cys-9, Cys-43, and Cys-44.

This sequence belongs to the archaeal Rpo10/eukaryotic RPB10 RNA polymerase subunit family. Part of the RNA polymerase complex. The cofactor is Zn(2+).

It is found in the cytoplasm. The catalysed reaction is RNA(n) + a ribonucleoside 5'-triphosphate = RNA(n+1) + diphosphate. Its function is as follows. DNA-dependent RNA polymerase (RNAP) catalyzes the transcription of DNA into RNA using the four ribonucleoside triphosphates as substrates. This Methanosarcina mazei (strain ATCC BAA-159 / DSM 3647 / Goe1 / Go1 / JCM 11833 / OCM 88) (Methanosarcina frisia) protein is DNA-directed RNA polymerase subunit Rpo10.